Consider the following 283-residue polypeptide: Phosphatidylserine decarboxylase proenzyme (283 aa).

Catalysis depends on charge relay system; for autoendoproteolytic cleavage activity residues Asp88, His145, and Ser248. Ser248 functions as the Schiff-base intermediate with substrate; via pyruvic acid; for decarboxylase activity in the catalytic mechanism. Position 248 is a pyruvic acid (Ser); by autocatalysis (Ser248).

This sequence belongs to the phosphatidylserine decarboxylase family. PSD-B subfamily. Prokaryotic type I sub-subfamily. Heterodimer of a large membrane-associated beta subunit and a small pyruvoyl-containing alpha subunit. Pyruvate is required as a cofactor. Is synthesized initially as an inactive proenzyme. Formation of the active enzyme involves a self-maturation process in which the active site pyruvoyl group is generated from an internal serine residue via an autocatalytic post-translational modification. Two non-identical subunits are generated from the proenzyme in this reaction, and the pyruvate is formed at the N-terminus of the alpha chain, which is derived from the carboxyl end of the proenzyme. The autoendoproteolytic cleavage occurs by a canonical serine protease mechanism, in which the side chain hydroxyl group of the serine supplies its oxygen atom to form the C-terminus of the beta chain, while the remainder of the serine residue undergoes an oxidative deamination to produce ammonia and the pyruvoyl prosthetic group on the alpha chain. During this reaction, the Ser that is part of the protease active site of the proenzyme becomes the pyruvoyl prosthetic group, which constitutes an essential element of the active site of the mature decarboxylase.

The protein resides in the cell membrane. It carries out the reaction a 1,2-diacyl-sn-glycero-3-phospho-L-serine + H(+) = a 1,2-diacyl-sn-glycero-3-phosphoethanolamine + CO2. Its pathway is phospholipid metabolism; phosphatidylethanolamine biosynthesis; phosphatidylethanolamine from CDP-diacylglycerol: step 2/2. Functionally, catalyzes the formation of phosphatidylethanolamine (PtdEtn) from phosphatidylserine (PtdSer). This chain is Phosphatidylserine decarboxylase proenzyme, found in Methylibium petroleiphilum (strain ATCC BAA-1232 / LMG 22953 / PM1).